A 411-amino-acid polypeptide reads, in one-letter code: Multidrug resistance protein MdtH (411 aa).

The next 11 helical transmembrane spans lie at 13–33 (YFLL…FPLI), 45–65 (ALLV…LGIF), 73–95 (LGAK…FMGI), 99–116 (PWLL…GTLF), 139–159 (LLMI…SWLL), 165–185 (LVCL…AWLL), 213–233 (YVFT…ILPI), 243–263 (AAVR…LYPI), 288–308 (IIPI…GIFY), 340–360 (LGLA…YDMG), and 365–385 (IPQL…LGFY).

It belongs to the major facilitator superfamily. DHA1 family. MdtH (TC 2.A.1.2.21) subfamily.

The protein localises to the cell membrane. This chain is Multidrug resistance protein MdtH, found in Baumannia cicadellinicola subsp. Homalodisca coagulata.